A 140-amino-acid polypeptide reads, in one-letter code: Sex-regulated protein janus-B (140 aa).

R42 contacts substrate. Residue H69 is the Proton acceptor of the active site. Residue 110–112 (SRT) coordinates substrate.

The protein belongs to the janus family.

Its function is as follows. JanA and janB regulate somatic sex differentiation. This is Sex-regulated protein janus-B (janB) from Drosophila teissieri (Fruit fly).